Consider the following 462-residue polypeptide: Probable peptidoglycan glycosyltransferase FtsW (462 aa).

The Cytoplasmic segment spans residues 1 to 63; that stretch reads MGCIVCSDGI…VRDGRKFDAP (63 aa). The chain crosses the membrane as a helical span at residues 64 to 84; it reads LLWMVVLMTAFGLLMIYSASV. The Periplasmic segment spans residues 85-97; the sequence is YLASKEGGDQFFY. A helical membrane pass occupies residues 98-118; it reads LTRQAGFVVAGLIASGFLWFL. Residues 119–125 lie on the Cytoplasmic side of the membrane; that stretch reads CRMRTWR. The helical transmembrane segment at 126–146 threads the bilayer; sequence RLVPWIFALSGLLLVAVLIAG. Topologically, residues 147-160 are periplasmic; that stretch reads REINGATRWIPLGP. Residues 161-181 traverse the membrane as a helical segment; the sequence is LNFQPTELFKLAVILYLASLF. The Cytoplasmic portion of the chain corresponds to 182–227; that stretch reads TRREEVLRSMESLGWQSIWRGTANLIMSATNPQARRETLEMYGRFR. The next 2 membrane-spanning stretches (helical) occupy residues 228–248 and 249–269; these read AIIL…VQPD and FGSF…AGLP. Over 270–271 the chain is Cytoplasmic; sequence WK. The helical transmembrane segment at 272–292 threads the bilayer; sequence YFFVLVGSVLGGMVLMITAAP. Residues 293-348 are Periplasmic-facing; it reads YRVQRVVAFLDPWKDPQGAGYQLTHSLMAIGRGEWFGMGLGASLSKRGFLPEAHTD. The chain crosses the membrane as a helical span at residues 349 to 369; sequence FIFAIIAEEFGFFGMCVLIFC. The Cytoplasmic portion of the chain corresponds to 370 to 386; sequence YGWLVVRAFSIGKQSRD. A helical membrane pass occupies residues 387-409; it reads LGLTFNAYIASGIGIWIGIQSFF. Over 410–424 the chain is Periplasmic; the sequence is NIGVNIGALPTKGLT. The helical transmembrane segment at 425-445 threads the bilayer; sequence LPLMSYGGSSVFFMLISMMLL. Residues 446 to 462 are Cytoplasmic-facing; sequence LRIDYENRRKMRGYRVE.

The protein belongs to the SEDS family. FtsW subfamily.

Its subcellular location is the cell inner membrane. It catalyses the reaction [GlcNAc-(1-&gt;4)-Mur2Ac(oyl-L-Ala-gamma-D-Glu-L-Lys-D-Ala-D-Ala)](n)-di-trans,octa-cis-undecaprenyl diphosphate + beta-D-GlcNAc-(1-&gt;4)-Mur2Ac(oyl-L-Ala-gamma-D-Glu-L-Lys-D-Ala-D-Ala)-di-trans,octa-cis-undecaprenyl diphosphate = [GlcNAc-(1-&gt;4)-Mur2Ac(oyl-L-Ala-gamma-D-Glu-L-Lys-D-Ala-D-Ala)](n+1)-di-trans,octa-cis-undecaprenyl diphosphate + di-trans,octa-cis-undecaprenyl diphosphate + H(+). It functions in the pathway cell wall biogenesis; peptidoglycan biosynthesis. Its function is as follows. Peptidoglycan polymerase that is essential for cell division. The chain is Probable peptidoglycan glycosyltransferase FtsW from Neisseria gonorrhoeae (strain NCCP11945).